The sequence spans 932 residues: Protein translocase subunit SecA (932 aa).

Residues Gln83, 101–105 (GEGKT), and Asp491 contribute to the ATP site.

It belongs to the SecA family. Monomer and homodimer. Part of the essential Sec protein translocation apparatus which comprises SecA, SecYEG and auxiliary proteins SecDF. Other proteins may also be involved.

The protein resides in the cell inner membrane. The protein localises to the cellular thylakoid membrane. It localises to the cytoplasm. The catalysed reaction is ATP + H2O + cellular proteinSide 1 = ADP + phosphate + cellular proteinSide 2.. Functionally, part of the Sec protein translocase complex. Interacts with the SecYEG preprotein conducting channel. Has a central role in coupling the hydrolysis of ATP to the transfer of proteins into and across the cell membrane, serving as an ATP-driven molecular motor driving the stepwise translocation of polypeptide chains across the membrane. In terms of biological role, probably participates in protein translocation into and across both the cytoplasmic and thylakoid membranes in cyanobacterial cells. This Cyanothece sp. (strain PCC 7425 / ATCC 29141) protein is Protein translocase subunit SecA.